Consider the following 492-residue polypeptide: ERAD-associated E3 ubiquitin-protein ligase HRD1A (492 aa).

The Cytoplasmic segment spans residues 1-3 (MIR). A helical membrane pass occupies residues 4–24 (LRTYAGLSFMATLAVIYHAFS). Topologically, residues 25–40 (SRGQFYPATVYLSTSK) are lumenal. Residues 41–61 (ISLVLLLNMCLVLMLSLWHLV) traverse the membrane as a helical segment. Over 62–98 (KFVFLGSLREAEVERLNEQAWRELMEILFAITIFRQD) the chain is Cytoplasmic. Residues 99–119 (FSSGFLPLVVTLLLIKALHWL) form a helical membrane-spanning segment. Topologically, residues 120 to 135 (AQKRVEYIETTPSVSK) are lumenal. The helical transmembrane segment at 136-156 (LSHFRIVSFMGFLLLVDSLFM) threads the bilayer. At 157-170 (YSSIRHLIQSRQAS) the chain is on the cytoplasmic side. The helical transmembrane segment at 171–191 (VSLFFSFEYMILATTTVAIFV) threads the bilayer. Topologically, residues 192–221 (KYVFYVTDMLMDGQWEKKPVYTFYLELIRD) are lumenal. The chain crosses the membrane as a helical span at residues 222-242 (LLHLSMYICFFFVIFMNYGVP). Residues 243 to 492 (LHLLRELYET…KGKSVADAAE (250 aa)) lie on the Cytoplasmic side of the membrane. An RING-type; atypical zinc finger spans residues 292-330 (CIICREEMTNAKKLICGHLFHVHCLRSWLERQQTCPTCR). 2 disordered regions span residues 339–379 (ATSA…NSLS) and 470–492 (ETRKPESAGEPENKGKSVADAAE). Residues 351–378 (QGSQQGTSSSGNQGSEISSSAGVSNNSL) show a composition bias toward low complexity. Basic and acidic residues predominate over residues 470-486 (ETRKPESAGEPENKGKS).

This sequence belongs to the HRD1 family.

It is found in the endoplasmic reticulum membrane. It catalyses the reaction S-ubiquitinyl-[E2 ubiquitin-conjugating enzyme]-L-cysteine + [acceptor protein]-L-lysine = [E2 ubiquitin-conjugating enzyme]-L-cysteine + N(6)-ubiquitinyl-[acceptor protein]-L-lysine.. The protein operates within protein modification; protein ubiquitination. Functionally, probable component of the HRD1 ubiquitin ligase complex that mediates the rapid degradation of misfolded endoplasmic reticulum (ER) proteins, a process called ER-associated degradation (ERAD). Targets the misfolded LRR receptor kinase BRI1. Functions redundantly with HRD3B. This is ERAD-associated E3 ubiquitin-protein ligase HRD1A from Arabidopsis thaliana (Mouse-ear cress).